The sequence spans 257 residues: Probable dihydroorotate dehydrogenase B (NAD(+)), electron transfer subunit (257 aa).

Positions 2 to 89 (EKPVICRIKE…RGPYGTYFEP (88 aa)) constitute an FAD-binding FR-type domain. The [2Fe-2S] cluster site is built by C208, C213, C216, and C226.

It belongs to the PyrK family. In terms of assembly, heterotetramer of 2 PyrK and 2 PyrD type B subunits. Requires [2Fe-2S] cluster as cofactor. The cofactor is FAD.

It functions in the pathway pyrimidine metabolism; UMP biosynthesis via de novo pathway; orotate from (S)-dihydroorotate (NAD(+) route): step 1/1. Functionally, responsible for channeling the electrons from the oxidation of dihydroorotate from the FMN redox center in the PyrD type B subunit to the ultimate electron acceptor NAD(+). This Methanocaldococcus jannaschii (strain ATCC 43067 / DSM 2661 / JAL-1 / JCM 10045 / NBRC 100440) (Methanococcus jannaschii) protein is Probable dihydroorotate dehydrogenase B (NAD(+)), electron transfer subunit.